The chain runs to 64 residues: Small ribosomal subunit protein bS21 (64 aa).

Belongs to the bacterial ribosomal protein bS21 family.

This chain is Small ribosomal subunit protein bS21, found in Neorickettsia sennetsu (strain ATCC VR-367 / Miyayama) (Ehrlichia sennetsu).